The following is a 355-amino-acid chain: NADH-quinone oxidoreductase subunit H (355 aa).

The next 8 membrane-spanning stretches (helical) occupy residues 17 to 37 (IIMV…IAYI), 86 to 106 (GVFL…WAVI), 119 to 139 (VGIL…IMAG), 165 to 185 (IGFV…SAVV), 204 to 224 (ILNW…VSAL), 262 to 282 (YVAI…GWLP), 291 to 311 (WVPG…LFAM), and 332 to 352 (FLPL…FAGI).

It belongs to the complex I subunit 1 family. NDH-1 is composed of 14 different subunits. Subunits NuoA, H, J, K, L, M, N constitute the membrane sector of the complex.

It is found in the cell inner membrane. It carries out the reaction a quinone + NADH + 5 H(+)(in) = a quinol + NAD(+) + 4 H(+)(out). In terms of biological role, NDH-1 shuttles electrons from NADH, via FMN and iron-sulfur (Fe-S) centers, to quinones in the respiratory chain. The immediate electron acceptor for the enzyme in this species is believed to be ubiquinone. Couples the redox reaction to proton translocation (for every two electrons transferred, four hydrogen ions are translocated across the cytoplasmic membrane), and thus conserves the redox energy in a proton gradient. This subunit may bind ubiquinone. The chain is NADH-quinone oxidoreductase subunit H from Bradyrhizobium diazoefficiens (strain JCM 10833 / BCRC 13528 / IAM 13628 / NBRC 14792 / USDA 110).